The chain runs to 452 residues: uncharacterized protein (452 aa).

It localises to the cytoplasm. The protein resides in the nucleus. This is an uncharacterized protein from Schizosaccharomyces pombe (strain 972 / ATCC 24843) (Fission yeast).